The sequence spans 691 residues: Elongation factor G (691 aa).

The tr-type G domain occupies 8-283 (KRVRNIGIAA…AVVAYLPAPD (276 aa)). Residues 17–24 (AHIDAGKT), 81–85 (DTPGH), and 135–138 (NKMD) each bind GTP.

This sequence belongs to the TRAFAC class translation factor GTPase superfamily. Classic translation factor GTPase family. EF-G/EF-2 subfamily.

It localises to the cytoplasm. Its function is as follows. Catalyzes the GTP-dependent ribosomal translocation step during translation elongation. During this step, the ribosome changes from the pre-translocational (PRE) to the post-translocational (POST) state as the newly formed A-site-bound peptidyl-tRNA and P-site-bound deacylated tRNA move to the P and E sites, respectively. Catalyzes the coordinated movement of the two tRNA molecules, the mRNA and conformational changes in the ribosome. This chain is Elongation factor G, found in Campylobacter lari (strain RM2100 / D67 / ATCC BAA-1060).